The chain runs to 413 residues: UPF0754 membrane protein PCC7424_0748 (413 aa).

2 consecutive transmembrane segments (helical) span residues 3 to 23 (IALE…GAII) and 391 to 411 (IVNL…VILL).

Belongs to the UPF0754 family.

It is found in the cell inner membrane. The sequence is that of UPF0754 membrane protein PCC7424_0748 from Gloeothece citriformis (strain PCC 7424) (Cyanothece sp. (strain PCC 7424)).